The following is a 287-amino-acid chain: Cell division protein ZipA (287 aa).

A topological domain (periplasmic) is located at residue Met-1. The helical transmembrane segment at 2–22 (EIGLREWLIVIGIIVIAGILF) threads the bilayer. Over 23–287 (DGWRRMRGSK…ERRALTQRRG (265 aa)) the chain is Cytoplasmic. Residues 48–140 (DEEETTSAEV…PTQRITEDKD (93 aa)) are disordered. 3 stretches are compositionally biased toward basic and acidic residues: residues 64-77 (LDTH…EHDL), 85-104 (REGK…KDEP), and 121-140 (GRDD…EDKD).

This sequence belongs to the ZipA family. As to quaternary structure, interacts with FtsZ via their C-terminal domains.

The protein localises to the cell inner membrane. Essential cell division protein that stabilizes the FtsZ protofilaments by cross-linking them and that serves as a cytoplasmic membrane anchor for the Z ring. Also required for the recruitment to the septal ring of downstream cell division proteins. This Pseudomonas syringae pv. syringae (strain B728a) protein is Cell division protein ZipA.